Here is a 650-residue protein sequence, read N- to C-terminus: AP-1-like transcription factor YAP1 (650 aa).

Residues 1-89 (MSVSTAKRSL…AFRERKERKM (89 aa)) are disordered. Phosphoserine is present on residues S9, S14, and S17. Basic and acidic residues-rich tracts occupy residues 22–50 (EGSKSRHDEIENEHRRTGTRDGEDSEQPK), 58–68 (KKQDLDPETKQ), and 80–89 (AFRERKERKM). Short sequence motifs (bipartite nuclear localization signal) lie at residues 35 to 42 (HRRTGTRD) and 68 to 75 (QKRTAQNR). In terms of domain architecture, bZIP spans 64 to 127 (PETKQKRTAQ…ITLVNELKKY (64 aa)). Residues 67-90 (KQKRTAQNRAAQRAFRERKERKMK) form a basic motif region. A leucine-zipper region spans residues 92-120 (LEKKVQSLESIQQQNEVEATFLRDQLITL). Disordered stretches follow at residues 149–169 (HFSKNNVNHSNSEPIDTPNDD) and 183–251 (QYPL…PNSS). Residues 150 to 162 (FSKNNVNHSNSEP) show a composition bias toward polar residues. A Phosphothreonine modification is found at T165. Residues 195-209 (SKNVGKQLPSPNDPS) show a composition bias toward polar residues. S204 carries the post-translational modification Phosphoserine. The segment at 220–378 (QKKLSDATDS…YENSFSGFGR (159 aa)) is transcription activation 1. Positions 226–246 (ATDSSSATLDSLSNSNDVLNN) are enriched in low complexity. A n-CRD region spans residues 303–315 (CSKMNQVCGTRQC). Cystine bridges form between C303-C598, C310-C629, C598-C620, C598-C629, and C620-C629. S372 is modified (phosphoserine). Residues 392 to 414 (DNSTGSTDSTGSTGNKNKKNNNN) are compositionally biased toward low complexity. Disordered stretches follow at residues 392 to 419 (DNSTGSTDSTGSTGNKNKKNNNNSDDVL), 510 to 532 (LFGEFLEDDDDDKKAANMSDDES), and 551 to 591 (LQSV…VPSK). A transcription activation 2 region spans residues 430 to 537 (NQVTNFFSPG…SDDESSLIKN (108 aa)). S528 bears the Phosphoserine mark. A compositionally biased stretch (polar residues) spans 551–570 (LQSVPGNESEISQKNGSSLQ). Low complexity predominate over residues 571 to 580 (NADKINNGND). The segment at 598 to 629 (CSEIWDRITTHPKYSDIDVDGLCSELMAKAKC) is c-CRD. The Nuclear export signal motif lies at 614 to 621 (IDVDGLCS).

This sequence belongs to the bZIP family. YAP subfamily. As to quaternary structure, interacts independent of oxidation state in the cytoplasm with the karyopherin PSE1/KAP121 (and less strongly with KAP123). The reduced form of YAP1 interacts in the nucleus with the nuclear export protein CRM1, and in the cytoplasm with YBP1 and the peroxiredoxin HYR1/GPX3/ORP1. Interacts with RBG1. In terms of processing, depending on the oxidative stress inducing agent, YAP1 can undergo two distinct conformational changes, both involving disulfide bond formation, and both masking the nuclear export signal, thus abolishing nuclear export by CRM1/exportin 1. The disulfide stress-inducing agent diamide leads to the formation of one of three possible disulfide bonds in the c-CRD. Peroxide stress induces the formation of the HYR1/GPX3- and YBP1-dependent interdomain disulfide bond between Cys-303 and Cys-598 (causing nuclear localization of YAP1), and the possibly stabilizing bond between Cys-310 and Cys-629 (required for full activity of YAP1).

Its subcellular location is the nucleus. It localises to the cytoplasm. In terms of biological role, transcription activator involved in oxidative stress response and redox homeostasis. Regulates the transcription of genes encoding antioxidant enzymes and components of the cellular thiol-reducing pathways, including the thioredoxin system (TRX2, TRR1), the glutaredoxin system (GSH1, GLR1), superoxide dismutase (SOD1, SOD2), glutathione peroxidase (GPX2), and thiol-specific peroxidases (TSA1, AHP1). The induction of some of these genes requires the cooperative action of both, YAP1 and SKN7. Preferentially binds to promoters with the core binding site 5'-TTA[CG]TAA-3'. Activity of the transcription factor is controlled through oxidation of specific cysteine residues resulting in the alteration of its subcellular location. Oxidative stress (as well as carbon stress, but not increased temperature, acidic pH, or ionic stress) induces nuclear accumulation and as a result YAP1 transcriptional activity. Activation by hydrogen peroxide or thiol-reactive chemicals elicit distinct adaptive gene responses. Nuclear export is restored when disulfide bonds are reduced by thioredoxin (TRX2), whose expression is controlled by YAP1, providing a mechanism for negative autoregulation. When overexpressed, YAP1 confers pleiotropic drug-resistance and increases cellular tolerance to cadmium, iron chelators and zinc. The sequence is that of AP-1-like transcription factor YAP1 from Saccharomyces cerevisiae (strain ATCC 204508 / S288c) (Baker's yeast).